A 62-amino-acid polypeptide reads, in one-letter code: uncharacterized protein (62 aa).

A run of 2 helical transmembrane segments spans residues 9–29 (HNEL…ALIG) and 42–62 (AAVV…LQLL).

The protein resides in the membrane. This is an uncharacterized protein from Saccharomyces cerevisiae (strain ATCC 204508 / S288c) (Baker's yeast).